A 147-amino-acid chain; its full sequence is Histone H3.X (147 aa).

Residues Met-1 to Ala-16 are compositionally biased toward low complexity. The tract at residues Met-1–Lys-43 is disordered. Arg-3 is subject to Asymmetric dimethylarginine. Arg-3 bears the Citrulline; alternate mark. Residue Thr-4 is modified to Phosphothreonine. Residue Lys-5 is modified to Allysine; alternate. At Lys-5 the chain carries N6,N6,N6-trimethyllysine; alternate. Lys-5 is modified (N6,N6-dimethyllysine; alternate). Lys-5 carries the N6-(2-hydroxyisobutyryl)lysine; alternate modification. Lys-5 carries the post-translational modification N6-(beta-hydroxybutyryl)lysine; alternate. Lys-5 carries the N6-acetyllysine; alternate modification. Lys-5 carries the post-translational modification N6-crotonyllysine; alternate. An N6-methyllysine; alternate modification is found at Lys-5. At Gln-6 the chain carries 5-glutamyl dopamine; alternate. Gln-6 is modified (5-glutamyl serotonin; alternate). Thr-7 bears the Phosphothreonine mark. A Citrulline; alternate modification is found at Arg-9. Arg-9 is subject to Symmetric dimethylarginine. Lys-10 bears the N6,N6,N6-trimethyllysine; alternate mark. Lys-10 carries the post-translational modification N6,N6-dimethyllysine; alternate. The residue at position 10 (Lys-10) is an N6-(2-hydroxyisobutyryl)lysine; alternate. Lys-10 bears the N6-(beta-hydroxybutyryl)lysine; alternate mark. At Lys-10 the chain carries N6-acetyllysine; alternate. At Lys-10 the chain carries N6-crotonyllysine; alternate. Residue Lys-10 is modified to N6-methyllysine; alternate. At Lys-10 the chain carries N6-butyryllysine; alternate. Lys-10 is subject to N6-lactoyllysine; alternate. Thr-12 bears the Phosphothreonine mark. Arg-18 carries the post-translational modification Asymmetric dimethylarginine. Citrulline; alternate is present on Arg-18. N6-(2-hydroxyisobutyryl)lysine; alternate occurs at positions 19 and 24. N6-(beta-hydroxybutyryl)lysine; alternate is present on residues Lys-19 and Lys-24. N6-acetyllysine; alternate is present on residues Lys-19 and Lys-24. N6-crotonyllysine; alternate is present on residues Lys-19 and Lys-24. N6-methyllysine; alternate is present on residues Lys-19 and Lys-24. Lys-19 and Lys-24 each carry N6-butyryllysine; alternate. N6-lactoyllysine; alternate is present on residues Lys-19 and Lys-24. An N6-glutaryllysine; alternate mark is found at Lys-19 and Lys-24. Residue Arg-27 is modified to Citrulline. N6,N6,N6-trimethyllysine; alternate is present on residues Lys-28 and Lys-37. 2 positions are modified to N6,N6-dimethyllysine; alternate: Lys-28 and Lys-37. N6-(2-hydroxyisobutyryl)lysine; alternate occurs at positions 28 and 37. An N6-(beta-hydroxybutyryl)lysine; alternate modification is found at Lys-28. 2 positions are modified to N6-acetyllysine; alternate: Lys-28 and Lys-37. At Lys-28 the chain carries N6-crotonyllysine; alternate. N6-methyllysine; alternate is present on residues Lys-28 and Lys-37. An N6-lactoyllysine; alternate modification is found at Lys-28. Lys-28 is modified (N6-glutaryllysine; alternate). The residue at position 38 (Lys-38) is an N6-methyllysine. Tyr-42 carries the post-translational modification Phosphotyrosine. Lys-57 carries the N6,N6,N6-trimethyllysine; alternate modification. Lys-57 bears the N6-(2-hydroxyisobutyryl)lysine; alternate mark. Lys-57 bears the N6-(beta-hydroxybutyryl)lysine; alternate mark. Residue Lys-57 is modified to N6-acetyllysine; alternate. Lys-57 bears the N6-crotonyllysine; alternate mark. An N6-lactoyllysine; alternate modification is found at Lys-57. N6-glutaryllysine; alternate is present on Lys-57. The residue at position 57 (Lys-57) is an N6-methyllysine. Lys-57 is subject to N6-succinyllysine; alternate. Phosphoserine is present on Ser-58. At Lys-65 the chain carries N6-(2-hydroxyisobutyryl)lysine; alternate. The residue at position 65 (Lys-65) is an N6-methyllysine; alternate. A Phosphoserine modification is found at Ser-87. Phosphothreonine is present on Thr-108.

The protein belongs to the histone H3 family. The nucleosome is a histone octamer containing two molecules each of H2A, H2B, H3 and H4 assembled in one H3-H4 heterotetramer and two H2A-H2B heterodimers. The octamer wraps approximately 147 bp of DNA. Acetylation is generally linked to gene activation. Acetylation on Lys-10 (H3K9ac) impairs methylation at Arg-9 (H3R8me2s). Acetylation on Lys-19 (H3K18ac) and Lys-24 (H3K24ac) favors methylation at Arg-18 (H3R17me). In terms of processing, citrullination at Arg-9 (H3R8ci) and/or Arg-18 (H3R17ci) impairs methylation and represses transcription. Post-translationally, asymmetric dimethylation at Arg-18 (H3R17me2a) is linked to gene activation. Symmetric dimethylation at Arg-9 (H3R8me2s) is linked to gene repression. Asymmetric dimethylation at Arg-3 (H3R2me2a) is linked to gene repression and is mutually exclusive with H3 Lys-5 methylation (H3K4me2 and H3K4me3). H3R2me2a is present at the 3' of genes regardless of their transcription state and is enriched on inactive promoters, while it is absent on active promoters. Methylation at Lys-5 (H3K4me) facilitates subsequent acetylation of H3 and H4. Methylation at Lys-10 (H3K9me) and Lys-28 (H3K27me), which are linked to gene repression, are underrepresented. Methylation at Lys-10 (H3K9me) is a specific target for HP1 proteins (CBX1, CBX3 and CBX5) and prevents subsequent acetylation of H3 and H4. In terms of processing, phosphorylation at Thr-7 (H3T6ph) is a specific tag for epigenetic transcriptional activation that prevents demethylation of Lys-5 (H3K4me) by LSD1/KDM1A. At centromeres, specifically phosphorylated at Thr-12 (H3T11ph) from prophase to early anaphase. Phosphorylation at Thr-12 (H3T11ph) is a specific tag for epigenetic transcriptional activation that promotes demethylation of Lys-10 (H3K9me). Phosphorylation at Tyr-42 (H3Y41ph) promotes exclusion of CBX5 (HP1 alpha) from chromatin. Post-translationally, lysine deamination at Lys-5 (H3K4all) to form allysine. Allysine formation only takes place on H3K4me3 and results in gene repression. Crotonylation (Kcr) is specifically present in male germ cells and marks testis-specific genes in post-meiotic cells, including X-linked genes that escape sex chromosome inactivation in haploid cells. Crotonylation marks active promoters and enhancers and confers resistance to transcriptional repressors. It is also associated with post-meiotically activated genes on autosomes. In terms of processing, butyrylation of histones marks active promoters and competes with histone acetylation. It is present during late spermatogenesis. In terms of tissue distribution, expressed at low level in some tissues, such as testis and brain.

The protein localises to the nucleus. Its subcellular location is the chromosome. Its function is as follows. Primate-specific variant histone H3, which constitutes a core component of nucleosomes. Nucleosomes wrap and compact DNA into chromatin, limiting DNA accessibility to the cellular machineries which require DNA as a template. Histones thereby play a central role in transcription regulation, DNA repair, DNA replication and chromosomal stability. DNA accessibility is regulated via a complex set of post-translational modifications of histones, also called histone code, and nucleosome remodeling. In Homo sapiens (Human), this protein is Histone H3.X.